Reading from the N-terminus, the 159-residue chain is uncharacterized protein (159 aa).

A run of 3 helical transmembrane segments spans residues 10–30 (FLSM…SLFF), 52–72 (MLIL…VILL), and 96–116 (LTLI…PFVT).

The protein localises to the membrane. This is an uncharacterized protein from Escherichia coli (strain K12).